Here is a 469-residue protein sequence, read N- to C-terminus: Probable Xaa-Pro aminopeptidase PEPP (469 aa).

Mn(2+) contacts are provided by aspartate 264, aspartate 275, glutamate 398, and glutamate 438.

The protein belongs to the peptidase M24B family. Mn(2+) serves as cofactor.

It catalyses the reaction Release of any N-terminal amino acid, including proline, that is linked to proline, even from a dipeptide or tripeptide.. Catalyzes the removal of a penultimate prolyl residue from the N-termini of peptides. In Ajellomyces capsulatus (strain G186AR / H82 / ATCC MYA-2454 / RMSCC 2432) (Darling's disease fungus), this protein is Probable Xaa-Pro aminopeptidase PEPP (PEPP).